A 355-amino-acid polypeptide reads, in one-letter code: Protein RecA (355 aa).

73 to 80 (GPESSGKT) is a binding site for ATP.

The protein belongs to the RecA family.

Its subcellular location is the cytoplasm. In terms of biological role, can catalyze the hydrolysis of ATP in the presence of single-stranded DNA, the ATP-dependent uptake of single-stranded DNA by duplex DNA, and the ATP-dependent hybridization of homologous single-stranded DNAs. It interacts with LexA causing its activation and leading to its autocatalytic cleavage. The polypeptide is Protein RecA (Solidesulfovibrio magneticus (strain ATCC 700980 / DSM 13731 / RS-1) (Desulfovibrio magneticus)).